The sequence spans 173 residues: Terpene cyclase subB (173 aa).

4 consecutive transmembrane segments (helical) span residues 11–31, 51–71, 112–132, and 141–161; these read PGYL…GLGW, ALMP…IYPF, LPFI…ALAL, and AFSA…QLLS.

Belongs to the paxB family.

Its subcellular location is the membrane. It functions in the pathway secondary metabolite biosynthesis; terpenoid biosynthesis. Its function is as follows. Terpene cyclase; part of the gene cluster that mediates the biosynthesis of the immunosuppressants subglutinols, meroterpenoids consisting of an alpha-pyrone (4-hydroxy-5,6-dimethyl-2-pyrone) moiety attached to a decalin core fused to a five-membered cyclic ether carrying a prenylside chain. The first step of the pathway is the synthesis of the alpha-pyrone moiety by the polyketide synthase subA via condensation of one acetyl-CoA starter unit with 3 malonyl-CoA units and 2 methylations. The alpha-pyrone is then combined with geranylgeranyl pyrophosphate (GGPP) formed by the GGPP synthase subD through the action of the prenyltransferase subC to yield a linear alpha-pyrone diterpenoid. Subsequent steps in the subglutinol biosynthetic pathway involve the decalin core formation, which is thought to be initiated by the epoxidation of the C10-C11 olefin by the FAD-dependent oxidoreductase subE. The following cyclization cascade would be catalyzed by the terpene cyclase subB. Lastly, the FAD-dependent dehydrogenase subF probably catalyzes the five-membered cyclic ether formation to complete the formation of subglutinol A. Subsequent redox reactions appear to give rise to subglutinol C and D, however, it remains unclear which enzymes are responsible for these transformations. SubD may have secondary function in the conversion of the identified subglutinols to subglutinol analog 45, which seems to be the major product of the cluster. This is Terpene cyclase subB from Metarhizium robertsii (strain ARSEF 23 / ATCC MYA-3075) (Metarhizium anisopliae (strain ARSEF 23)).